Consider the following 286-residue polypeptide: Acyl-CoA-binding domain-containing protein 6 (286 aa).

An ACB domain is found at 32–117; that stretch reads LQCQFEQAAK…VKKLDPDWSP (86 aa). Residues 59 to 63, K85, and Y104 each bind an acyl-CoA; that span reads YARYK. ANK repeat units lie at residues 182 to 211 and 215 to 244; these read EGRSLLHWACDRGHTQLVSVILFHNAHINM and EGQTPLHYASACEFPDIVDLLLDHGADPSL.

It is found in the cytoplasm. It localises to the nucleus. In terms of biological role, binds long-chain acyl-coenzyme A molecules with a strong preference for unsaturated C18:1-CoA. Does not bind fatty acids. Plays a role in protein N-myristoylation. This is Acyl-CoA-binding domain-containing protein 6 (acbd6) from Xenopus laevis (African clawed frog).